The sequence spans 179 residues: MTRLENMYKKEVVPALIKRFGYSNPMAVPRLVKITLNMGVGEAATNKKVLENAVADMAKISGQRPIVTKSRISVASFKIRNGWPIGCKTTLRRSKMYEFLDRLINISLPCVRDFRGIPPRSFDGRGNFNMGVKEQVVFPEIDFDAVDAIRGMDIAITTTANSDAEAKALLDAFNFPFRN.

Belongs to the universal ribosomal protein uL5 family. In terms of assembly, part of the 50S ribosomal subunit; part of the 5S rRNA/L5/L18/L25 subcomplex. Contacts the 5S rRNA and the P site tRNA. Forms a bridge to the 30S subunit in the 70S ribosome.

Its function is as follows. This is one of the proteins that bind and probably mediate the attachment of the 5S RNA into the large ribosomal subunit, where it forms part of the central protuberance. In the 70S ribosome it contacts protein S13 of the 30S subunit (bridge B1b), connecting the 2 subunits; this bridge is implicated in subunit movement. Contacts the P site tRNA; the 5S rRNA and some of its associated proteins might help stabilize positioning of ribosome-bound tRNAs. In Xylella fastidiosa (strain 9a5c), this protein is Large ribosomal subunit protein uL5.